The chain runs to 247 residues: Geranylgeranylglyceryl phosphate synthase (247 aa).

2 residues coordinate Mg(2+): Asp23 and Ser52. Residues 171–177, 203–204, and 225–226 contribute to the sn-glycerol 1-phosphate site; these read YLEAGSG, GG, and GT.

The protein belongs to the GGGP/HepGP synthase family. Group II subfamily. Mg(2+) is required as a cofactor.

It localises to the cytoplasm. It catalyses the reaction sn-glycerol 1-phosphate + (2E,6E,10E)-geranylgeranyl diphosphate = sn-3-O-(geranylgeranyl)glycerol 1-phosphate + diphosphate. It participates in membrane lipid metabolism; glycerophospholipid metabolism. Prenyltransferase that catalyzes the transfer of the geranylgeranyl moiety of geranylgeranyl diphosphate (GGPP) to the C3 hydroxyl of sn-glycerol-1-phosphate (G1P). This reaction is the first ether-bond-formation step in the biosynthesis of archaeal membrane lipids. The polypeptide is Geranylgeranylglyceryl phosphate synthase (Methanosarcina barkeri (strain Fusaro / DSM 804)).